The sequence spans 147 residues: Hemoglobin subunit deltaH (147 aa).

One can recognise a Globin domain in the interval R3–H147. Heme b-binding residues include H64 and H93.

It belongs to the globin family. In terms of assembly, heterotetramer of two delta chains and two alpha chains. In terms of tissue distribution, red blood cells.

In Dendrohyrax dorsalis (Beecroft's tree hyrax), this protein is Hemoglobin subunit deltaH (HBD).